Here is a 140-residue protein sequence, read N- to C-terminus: MTRNERIFHAVLFELMALAIIVPAAALITGKGSSDLALVGIGLSLYTVVWNYIYNLYFDKWFGSNRADRSLAMRLGHTVGFEGGLIFISIPVIAWFLEITFLRALMLEAGFLVFFLFYATGFNWLYDKVQPFGKMRKLLV.

4 helical membrane-spanning segments follow: residues 7–27, 36–56, 79–99, and 105–125; these read IFHAVLFELMALAIIVPAAAL, LALVGIGLSLYTVVWNYIYNL, VGFEGGLIFISIPVIAWFLEI, and LMLEAGFLVFFLFYATGFNWL.

It belongs to the proteobacterial antimicrobial compound efflux (PACE) (TC 2.A.117) family.

It localises to the cell inner membrane. Its function is as follows. Mediates the efflux of short-chain diamines when energized by an electrochemical gradient. Confers resistance to chlorhexidine, benzalkonium, proflavine and acriflavine. Mediates efflux of both proflavine and acriflavine via an energy-dependent mechanism. The sequence is that of Short-chain diamines transporter from Vibrio parahaemolyticus serotype O3:K6 (strain RIMD 2210633).